A 75-amino-acid chain; its full sequence is Exodeoxyribonuclease 7 small subunit (75 aa).

It belongs to the XseB family. Heterooligomer composed of large and small subunits.

Its subcellular location is the cytoplasm. The catalysed reaction is Exonucleolytic cleavage in either 5'- to 3'- or 3'- to 5'-direction to yield nucleoside 5'-phosphates.. Its function is as follows. Bidirectionally degrades single-stranded DNA into large acid-insoluble oligonucleotides, which are then degraded further into small acid-soluble oligonucleotides. The sequence is that of Exodeoxyribonuclease 7 small subunit from Thermoanaerobacter sp. (strain X514).